Consider the following 191-residue polypeptide: Fe/S biogenesis protein NfuA (191 aa).

[4Fe-4S] cluster-binding residues include C149 and C152.

The protein belongs to the NfuA family. In terms of assembly, homodimer. [4Fe-4S] cluster is required as a cofactor.

Functionally, involved in iron-sulfur cluster biogenesis. Binds a 4Fe-4S cluster, can transfer this cluster to apoproteins, and thereby intervenes in the maturation of Fe/S proteins. Could also act as a scaffold/chaperone for damaged Fe/S proteins. The polypeptide is Fe/S biogenesis protein NfuA (Escherichia coli O139:H28 (strain E24377A / ETEC)).